Consider the following 32-residue polypeptide: Phallacidin proprotein (32 aa).

A propeptide spanning residues 1-10 (MSDINATRLP) is cleaved from the precursor. Positions 11 to 17 (AWLVDCP) form a cross-link, cyclopeptide (Ala-Pro). The 2'-cysteinyl-6'-hydroxytryptophan sulfoxide (Trp-Cys) cross-link spans 12–16 (WLVDC). Residues 18–32 (CVGDDINRLLTRGEK) constitute a propeptide that is removed on maturation.

Belongs to the MSDIN fungal toxin family. Processed by the macrocyclase-peptidase enzyme POPB to yield a toxic cyclic heptapeptide. POPB first removes 10 residues from the N-terminus. Conformational trapping of the remaining peptide forces the enzyme to release this intermediate rather than proceed to macrocyclization. The enzyme rebinds the remaining peptide in a different conformation and catalyzes macrocyclization of the N-terminal 7 residues.

Functionally, major toxin that belongs to the bicyclic heptapeptides called phallotoxins. Although structurally related to amatoxins, phallotoxins have a different mode of action, which is the stabilization of F-actin. Phallotoxins are poisonous when administered parenterally, but not orally because of poor absorption. The polypeptide is Phallacidin proprotein (Amanita pallidorosea).